Consider the following 252-residue polypeptide: Triosephosphate isomerase (252 aa).

Substrate is bound at residue 10–12; sequence NWK. H96 (electrophile) is an active-site residue. E168 functions as the Proton acceptor in the catalytic mechanism. Residues G174, S213, and 234-235 contribute to the substrate site; that span reads GG.

This sequence belongs to the triosephosphate isomerase family. As to quaternary structure, homodimer.

Its subcellular location is the cytoplasm. It catalyses the reaction D-glyceraldehyde 3-phosphate = dihydroxyacetone phosphate. It functions in the pathway carbohydrate biosynthesis; gluconeogenesis. It participates in carbohydrate degradation; glycolysis; D-glyceraldehyde 3-phosphate from glycerone phosphate: step 1/1. Its function is as follows. Involved in the gluconeogenesis. Catalyzes stereospecifically the conversion of dihydroxyacetone phosphate (DHAP) to D-glyceraldehyde-3-phosphate (G3P). This is Triosephosphate isomerase from Idiomarina loihiensis (strain ATCC BAA-735 / DSM 15497 / L2-TR).